Consider the following 418-residue polypeptide: IQ domain-containing protein C (418 aa).

An IQ domain is found at 6-35 (FLRKVSTLQAGFRGFLVRRQFQSLRAEYEA). Disordered regions lie at residues 101–142 (QKKT…SVSK), 230–264 (HHAE…KGRE), 280–299 (SQAG…QPFK), 327–355 (AETQ…AGPC), and 376–418 (GSLD…LQWR). Composition is skewed to polar residues over residues 129-142 (KASQ…SVSK) and 249-259 (SVTSAGKTTAG). Residues 141-176 (SKMENADLGLSQSQQELQEQRNHLAMELLWLQQAIN) are a coiled coil. A compositionally biased stretch (polar residues) spans 390–404 (PPSAGSSGHGNTSEL).

In Mus musculus (Mouse), this protein is IQ domain-containing protein C (Iqcc).